The primary structure comprises 307 residues: Ninja-family protein 5 (307 aa).

Disordered stretches follow at residues 1 to 159 (MASR…EHTV) and 173 to 208 (TAGS…EPQP). A compositionally biased stretch (gly residues) spans 8 to 30 (GGFGRDGGQAPVGGAGAAPGPGG). Polar residues-rich tracts occupy residues 63-83 (QRSS…GTSC) and 173-183 (TAGSPTPSRPQ).

This sequence belongs to the Ninja family.

It is found in the nucleus. This Zea mays (Maize) protein is Ninja-family protein 5.